The sequence spans 153 residues: Putative pre-16S rRNA nuclease (153 aa).

The protein belongs to the YqgF nuclease family.

Its subcellular location is the cytoplasm. Could be a nuclease involved in processing of the 5'-end of pre-16S rRNA. This chain is Putative pre-16S rRNA nuclease, found in Prochlorococcus marinus (strain AS9601).